The primary structure comprises 1016 residues: Protein kinase C-like 2 (1016 aa).

Positions 1–68 (MDMIDEAITE…LEKLKLRKNG (68 aa)) constitute an REM-1 1 domain. The tract at residues 68–101 (GVRKSNSEKPSVGIEKNPSFSTTKSAKSFSSTSS) is disordered. Positions 86–101 (SFSTTKSAKSFSSTSS) are enriched in low complexity. The region spanning 111–188 (NYDTPLTISK…LKRYHDLHIE (78 aa)) is the REM-1 2 domain. In terms of domain architecture, C2 spans 195 to 307 (PSTESRGNLN…VEKQRRKKVE (113 aa)). 2 Phorbol-ester/DAG-type zinc fingers span residues 405 to 453 (GHKF…VTKC) and 473 to 523 (PHHF…PDFC). Residues 543–602 (YKAQQHKQKSSHHKHHHHKKSKSSSSKHKENDKASVSITTTTTPSITPADPVPTSPKPLA) are disordered. Over residues 546 to 568 (QQHKQKSSHHKHHHHKKSKSSSS) the composition is skewed to basic residues. Over residues 579–590 (SITTTTTPSITP) the composition is skewed to low complexity. Residues 683-942 (FTFLSVLGKG…AEDVMTHPFF (260 aa)) form the Protein kinase domain. ATP is bound by residues 689–697 (LGKGNFGKV) and K712. The Proton acceptor role is filled by D808. In terms of domain architecture, AGC-kinase C-terminal spans 943–1013 (SNINWDDIYH…SCEDDKPSTT (71 aa)). The residue at position 984 (T984) is a Phosphothreonine.

It belongs to the protein kinase superfamily. AGC Ser/Thr protein kinase family. PKC subfamily. In terms of assembly, interacts with rho2.

It carries out the reaction L-seryl-[protein] + ATP = O-phospho-L-seryl-[protein] + ADP + H(+). It catalyses the reaction L-threonyl-[protein] + ATP = O-phospho-L-threonyl-[protein] + ADP + H(+). Involved in the control of the cell shape. Target of the inhibitor staurosporine. The chain is Protein kinase C-like 2 (pck2) from Schizosaccharomyces pombe (strain 972 / ATCC 24843) (Fission yeast).